A 365-amino-acid chain; its full sequence is Carboxynorspermidine/carboxyspermidine decarboxylase (365 aa).

N6-(pyridoxal phosphate)lysine is present on Lys-37. 2 residues coordinate substrate: Glu-233 and Asp-269.

Belongs to the Orn/Lys/Arg decarboxylase class-II family. NspC subfamily. In terms of assembly, homodimer. Pyridoxal 5'-phosphate serves as cofactor.

The protein localises to the cytoplasm. It catalyses the reaction carboxynorspermidine + H(+) = norspermidine + CO2. The enzyme catalyses carboxyspermidine + H(+) = spermidine + CO2. Catalyzes the decarboxylation of carboxynorspermidine and carboxyspermidine. This Herminiimonas arsenicoxydans protein is Carboxynorspermidine/carboxyspermidine decarboxylase.